We begin with the raw amino-acid sequence, 113 residues long: MEYVYAALILNESDEEVNEENITAVLEAAGVDVEESRVKALVAALEDVDIEEAIETAAAAPAPAAGGSAGGEVEAADDDDEEDAEEEAADEGGDDDGDDDEEADGEGLGALFG.

The span at 56 to 66 shows a compositional bias: low complexity; the sequence is TAAAAPAPAAG. A disordered region spans residues 56 to 113; sequence TAAAAPAPAAGGSAGGEVEAADDDDEEDAEEEAADEGGDDDGDDDEEADGEGLGALFG. Over residues 74 to 105 the composition is skewed to acidic residues; the sequence is EAADDDDEEDAEEEAADEGGDDDGDDDEEADG.

Belongs to the eukaryotic ribosomal protein P1/P2 family. In terms of assembly, part of the 50S ribosomal subunit. Homodimer, it forms part of the ribosomal stalk which helps the ribosome interact with GTP-bound translation factors. Forms a heptameric uL10/P0(P1)2(P1)2(P1)2 complex, where uL10/P0 forms an elongated spine to which the P1 dimers bind in a sequential fashion.

Functionally, forms part of the ribosomal stalk, playing a central role in the interaction of the ribosome with GTP-bound translation factors. The sequence is that of Large ribosomal subunit protein P1 from Haloferax volcanii (strain ATCC 29605 / DSM 3757 / JCM 8879 / NBRC 14742 / NCIMB 2012 / VKM B-1768 / DS2) (Halobacterium volcanii).